A 362-amino-acid polypeptide reads, in one-letter code: Glutamate 5-kinase (362 aa).

Lysine 3 provides a ligand contact to ATP. 3 residues coordinate substrate: serine 43, aspartate 128, and asparagine 140. ATP is bound by residues 160–161 (TD) and 202–208 (TGGMRTK). The PUA domain maps to 267–348 (PGTILIDAGA…REIEPILGYS (82 aa)).

Belongs to the glutamate 5-kinase family.

The protein localises to the cytoplasm. It carries out the reaction L-glutamate + ATP = L-glutamyl 5-phosphate + ADP. It functions in the pathway amino-acid biosynthesis; L-proline biosynthesis; L-glutamate 5-semialdehyde from L-glutamate: step 1/2. Catalyzes the transfer of a phosphate group to glutamate to form L-glutamate 5-phosphate. The chain is Glutamate 5-kinase from Xanthomonas campestris pv. campestris (strain 8004).